Reading from the N-terminus, the 426-residue chain is Serine--tRNA ligase (426 aa).

230 to 232 (TAE) provides a ligand contact to L-serine. 261 to 263 (RSE) contacts ATP. Glutamate 284 provides a ligand contact to L-serine. 348-351 (EISS) contributes to the ATP binding site. Position 384 (serine 384) interacts with L-serine.

It belongs to the class-II aminoacyl-tRNA synthetase family. Type-1 seryl-tRNA synthetase subfamily. As to quaternary structure, homodimer. The tRNA molecule binds across the dimer.

It localises to the cytoplasm. It carries out the reaction tRNA(Ser) + L-serine + ATP = L-seryl-tRNA(Ser) + AMP + diphosphate + H(+). The catalysed reaction is tRNA(Sec) + L-serine + ATP = L-seryl-tRNA(Sec) + AMP + diphosphate + H(+). It functions in the pathway aminoacyl-tRNA biosynthesis; selenocysteinyl-tRNA(Sec) biosynthesis; L-seryl-tRNA(Sec) from L-serine and tRNA(Sec): step 1/1. Its function is as follows. Catalyzes the attachment of serine to tRNA(Ser). Is also able to aminoacylate tRNA(Sec) with serine, to form the misacylated tRNA L-seryl-tRNA(Sec), which will be further converted into selenocysteinyl-tRNA(Sec). The sequence is that of Serine--tRNA ligase from Erythrobacter litoralis (strain HTCC2594).